A 330-amino-acid polypeptide reads, in one-letter code: Short chain dehydrogenase macD (330 aa).

Lysine 57, aspartate 86, asparagine 113, tyrosine 204, and lysine 208 together coordinate NADP(+). Tyrosine 204 serves as the catalytic Proton donor. The active-site Lowers pKa of active site Tyr is lysine 208.

This sequence belongs to the short-chain dehydrogenases/reductases (SDR) family.

The protein operates within secondary metabolite biosynthesis; terpenoid biosynthesis. Short chain dehydrogenase; part of the gene cluster that mediates the biosynthesis of macrophorins, isoprenoid epoxycyclohexenones containing cyclized drimane moieties. The first step of the pathway is the synthesis of 6-methylsalicylic acid (6-MSA) by the polyketide synthase macA. 6-MSA is then converted to m-cresol by the decarboxylase macB. The cytochrome P450 monooxygenase macC then catalyzes the oxidation of m-cresol to toluquinol. Epoxidation of toluquinol is then performed by the short chain dehydrogenase macD, with the help of macE, and a further prenylation by macG leads to 7-deacetoxyyanuthone A. The next step is the hydroxylation of C-22 of 7-deacetoxyyanuthone A by the cytochrome P450 monooxygenase macH to yield 22-deacetylyanuthone A. O-Mevalon transferase macI then attaches mevalon to the hydroxyl group of 22-deacetylyanuthone A to produce yanuthone E. The terpene cyclase macJ catalyzes the cyclization of 22-deacetylyanuthone A to macrophorin A. MacJ is also able to catalyze cyclization of yanuthone E and 7-deacetoxyyanuthone A to their corresponding macrophorins. The macJ products can be further modified by macH and macJ, as well as by the FAD-dependent monooxygenase macF, to produce additional macrophorins, including 4'-oxomacrophorin A, 4'-oxomacrophorin D and 4'-oxomacrophorin E. This is Short chain dehydrogenase macD from Penicillium terrestre.